The sequence spans 434 residues: Trigger factor (434 aa).

The 86-residue stretch at 162–247 (GDKINISLIA…FNTVEQAKLP (86 aa)) folds into the PPIase FKBP-type domain.

The protein belongs to the FKBP-type PPIase family. Tig subfamily.

Its subcellular location is the cytoplasm. The catalysed reaction is [protein]-peptidylproline (omega=180) = [protein]-peptidylproline (omega=0). Involved in protein export. Acts as a chaperone by maintaining the newly synthesized protein in an open conformation. Functions as a peptidyl-prolyl cis-trans isomerase. This Methylobacillus flagellatus (strain ATCC 51484 / DSM 6875 / VKM B-1610 / KT) protein is Trigger factor.